The primary structure comprises 210 residues: Na(+)-translocating NADH-quinone reductase subunit D (210 aa).

5 helical membrane passes run 42–62 (FVMT…VSLI), 72–92 (IIVQ…VLKA), 103–123 (VFVG…AFAM), 131–151 (LIDG…VGFF), and 178–198 (NGLM…IWVI).

It belongs to the NqrDE/RnfAE family. As to quaternary structure, composed of six subunits; NqrA, NqrB, NqrC, NqrD, NqrE and NqrF.

It localises to the cell inner membrane. It catalyses the reaction a ubiquinone + n Na(+)(in) + NADH + H(+) = a ubiquinol + n Na(+)(out) + NAD(+). This reaction is tightly coupled to the Na(+) pumping activity and specifically requires Na(+) for activity. Inhibited by korormicin and 2-N-heptyl-4-hydroxyquinoline N-oxide (HQNO). Its function is as follows. NQR complex catalyzes the reduction of ubiquinone-1 to ubiquinol by two successive reactions, coupled with the transport of Na(+) ions from the cytoplasm to the periplasm. NqrA to NqrE are probably involved in the second step, the conversion of ubisemiquinone to ubiquinol. The sequence is that of Na(+)-translocating NADH-quinone reductase subunit D from Vibrio alginolyticus.